A 486-amino-acid polypeptide reads, in one-letter code: Probable transporter MCH1 (486 aa).

Residues 1-29 are Cytoplasmic-facing; the sequence is MPLSKVEHYLSYHTRLLLPHVLSLQSSHR. The helical transmembrane segment at 30–50 threads the bilayer; that stretch reads VAYIFSLLSAVSTGFITLISL. Over 51–67 the chain is Vacuolar; sequence YSQPWQKHLNYSSWQIN. Asn-60 is a glycosylation site (N-linked (GlcNAc...) asparagine). Residues 68 to 88 traverse the membrane as a helical segment; that stretch reads TIASMTNLGMYLTPPILGMIA. The Cytoplasmic segment spans residues 89–93; the sequence is DSHGP. A helical membrane pass occupies residues 94-114; it reads ITLSLLAIIGFIPSYSYLAYV. Residues 115-133 are Vacuolar-facing; the sequence is FNHPELSLGGNGDSSFNLS. N-linked (GlcNAc...) asparagine glycosylation is present at Asn-131. The helical transmembrane segment at 134–154 threads the bilayer; the sequence is IICFVFIGISTSALYFSALLT. Topologically, residues 155–163 are cytoplasmic; sequence CTKLYPHTK. Residues 164–184 form a helical membrane-spanning segment; that stretch reads LLSISLPTTCYGISSVVGSQL. Topologically, residues 185–212 are vacuolar; that stretch reads LRIKWFWSSNASSSSSNSDLNLGRVFQT. An N-linked (GlcNAc...) asparagine glycan is attached at Asn-194. The chain crosses the membrane as a helical span at residues 213–233; it reads FALVYVVIGLLAWIATSVVSL. The Cytoplasmic portion of the chain corresponds to 234-279; that stretch reads LHFNEEQDNQKRLDDQTDVEQSPLLERSNHVQEKFTQTMLRIFSDP. Ser-255 is modified (phosphoserine). Residues 280 to 300 traverse the membrane as a helical segment; sequence VTYILAVSILLSLGPLEMFIA. Over 301–320 the chain is Vacuolar; that stretch reads NMGSLTNLLVQLDAPTLSTK. A helical membrane pass occupies residues 321–343; it reads LLSTYALSSTFTRLLTGIVADFF. The Cytoplasmic portion of the chain corresponds to 344 to 347; sequence AKKK. A helical transmembrane segment spans residues 348–368; sequence ISIKWILLTFLSLGVCAQLFL. At 369–385 the chain is on the vacuolar side; that stretch reads LKMTSSASPWGLVPTGS. A helical membrane pass occupies residues 386 to 406; that stretch reads LVGIVYGGLFTVYPTLVLLVW. Topologically, residues 407 to 413 are cytoplasmic; that stretch reads GERSFGT. A helical transmembrane segment spans residues 414–434; sequence VYGSLLIAPAIGSMIFCMLYA. At 435–456 the chain is on the vacuolar side; that stretch reads KFYDSRCMSGGGDLRNPSCISA. A helical membrane pass occupies residues 457–477; it reads VYKYSSIAFVVSAVLSAVVFW. The Cytoplasmic segment spans residues 478-486; that stretch reads KLKSRKLRI.

The protein belongs to the major facilitator superfamily.

It localises to the vacuole membrane. In terms of biological role, probable transporter. Does not act in the transport of monocarboxylic acids across the plasma membrane. This chain is Probable transporter MCH1 (MCH1), found in Saccharomyces cerevisiae (strain ATCC 204508 / S288c) (Baker's yeast).